The sequence spans 563 residues: MRKFNKPLLALLIGSTLCSAAQAAAPGKPTIAWGNTKFAIVEVDQAATAYNNLVKVKNAADVSVSWNLWNGDAGTTAKILLNGKEAWSGPSTGSSGTANFKVNKGGRYQMQVALCNADGCTASDATEIVVADTDGSHLAPLKEPLLEKNKPYKQNSGKVVGSYFVEWGVYGRNFTVDKIPAQNLTHLLYGFIPICGGNGINDSLKEIEGSFQALQRSCQGREDFKVSIHDPFAALQKAQKGVTAWDDPYKGNFGQLMALKQAHPDLKILPSIGGWTLSDPFFFMGDKVKRDRFVGSVKEFLQTWKFFDGVDIDWEFPGGKGANPNLGSPQDGETYVLLMKELRAMLDQLSAETGRKYELTSAISAGKDKIDKVAYNVAQNSMDHIFLMSYDFYGPFDLKNLGHQTALNAPAWKPDTAYTTVNGVNALLAQGVKPGKVVVGTAMYGRGWTGVNGYQNNIPFTGTATGPVKGTWKNGIVDYRQIAGQFMSGEWQYTYDATAEAPYVFKPSTGDLITFDDARSVQAKGKYVLDKQLGGLFSWEIDADNGDILNSMNASLGNSAGVQ.

The signal sequence occupies residues 1 to 23 (MRKFNKPLLALLIGSTLCSAAQA). The region spanning 158–559 (KVVGSYFVEW…NSMNASLGNS (402 aa)) is the GH18 domain. E315 (proton donor) is an active-site residue.

The protein belongs to the glycosyl hydrolase 18 family. Chitinase class II subfamily.

It catalyses the reaction Random endo-hydrolysis of N-acetyl-beta-D-glucosaminide (1-&gt;4)-beta-linkages in chitin and chitodextrins.. The polypeptide is Chitinase A (chiA) (Serratia marcescens).